Consider the following 306-residue polypeptide: Ornithine carbamoyltransferase (306 aa).

Carbamoyl phosphate contacts are provided by residues 46–49, Gln-73, Arg-97, and 124–127; these read STRT and HPTQ. Residues Asn-156, Asp-220, and 224–225 each bind L-ornithine; that span reads SM. Carbamoyl phosphate is bound by residues 260–261 and Arg-288; that span reads CL.

It belongs to the aspartate/ornithine carbamoyltransferase superfamily. OTCase family.

The protein resides in the cytoplasm. The enzyme catalyses carbamoyl phosphate + L-ornithine = L-citrulline + phosphate + H(+). It participates in amino-acid biosynthesis; L-arginine biosynthesis; L-arginine from L-ornithine and carbamoyl phosphate: step 1/3. Its function is as follows. Reversibly catalyzes the transfer of the carbamoyl group from carbamoyl phosphate (CP) to the N(epsilon) atom of ornithine (ORN) to produce L-citrulline. In Campylobacter jejuni (strain RM1221), this protein is Ornithine carbamoyltransferase.